Consider the following 338-residue polypeptide: Ferrochelatase (338 aa).

2 residues coordinate Fe cation: His202 and Glu283.

The protein belongs to the ferrochelatase family.

Its subcellular location is the cytoplasm. The enzyme catalyses heme b + 2 H(+) = protoporphyrin IX + Fe(2+). The protein operates within porphyrin-containing compound metabolism; protoheme biosynthesis; protoheme from protoporphyrin-IX: step 1/1. In terms of biological role, catalyzes the ferrous insertion into protoporphyrin IX. The chain is Ferrochelatase from Acinetobacter baumannii (strain AB307-0294).